The following is a 451-amino-acid chain: UDP-N-acetylmuramoylalanine--D-glutamate ligase (451 aa).

118-124 (GTKGKST) contributes to the ATP binding site.

This sequence belongs to the MurCDEF family.

The protein resides in the cytoplasm. It carries out the reaction UDP-N-acetyl-alpha-D-muramoyl-L-alanine + D-glutamate + ATP = UDP-N-acetyl-alpha-D-muramoyl-L-alanyl-D-glutamate + ADP + phosphate + H(+). It participates in cell wall biogenesis; peptidoglycan biosynthesis. Its function is as follows. Cell wall formation. Catalyzes the addition of glutamate to the nucleotide precursor UDP-N-acetylmuramoyl-L-alanine (UMA). The protein is UDP-N-acetylmuramoylalanine--D-glutamate ligase of Borreliella burgdorferi (strain ZS7) (Borrelia burgdorferi).